The primary structure comprises 162 residues: Cyclic pyranopterin monophosphate synthase (162 aa).

Residues 79–81 (LCH) and 117–118 (ME) contribute to the substrate site. Aspartate 132 is a catalytic residue.

The protein belongs to the MoaC family. Homohexamer; trimer of dimers.

It carries out the reaction (8S)-3',8-cyclo-7,8-dihydroguanosine 5'-triphosphate = cyclic pyranopterin phosphate + diphosphate. It participates in cofactor biosynthesis; molybdopterin biosynthesis. In terms of biological role, catalyzes the conversion of (8S)-3',8-cyclo-7,8-dihydroguanosine 5'-triphosphate to cyclic pyranopterin monophosphate (cPMP). The polypeptide is Cyclic pyranopterin monophosphate synthase (Bordetella petrii (strain ATCC BAA-461 / DSM 12804 / CCUG 43448)).